The following is a 261-amino-acid chain: Small ribosomal subunit protein uS2 (261 aa).

Belongs to the universal ribosomal protein uS2 family.

This Paracoccus denitrificans (strain Pd 1222) protein is Small ribosomal subunit protein uS2.